Consider the following 1108-residue polypeptide: Alpha-mannosidase 2 (1108 aa).

The Cytoplasmic segment spans residues 1 to 9 (MLRIRRRFA). Residues 10–30 (LVICSGCLLVFLSLYIILNFA) traverse the membrane as a helical; Signal-anchor for type II membrane protein segment. The Lumenal portion of the chain corresponds to 31 to 1108 (APAATQIKPN…TAAYVSSHSS (1078 aa)). The segment at 70 to 92 (AETSNRDDPIRPPLKVARSPRPG) is disordered. Zn(2+) contacts are provided by His-153, Asp-155, Asp-267, and His-534. The active-site Nucleophile is the Asp-267.

Belongs to the glycosyl hydrolase 38 family. Homodimer; disulfide-linked. Requires Zn(2+) as cofactor.

It localises to the golgi apparatus membrane. It carries out the reaction N(4)-{beta-D-GlcNAc-(1-&gt;2)-alpha-D-Man-(1-&gt;3)-[alpha-D-Man-(1-&gt;3)-[alpha-D-Man-(1-&gt;6)]-alpha-D-Man-(1-&gt;6)]-beta-D-Man-(1-&gt;4)-beta-D-GlcNAc-(1-&gt;4)-beta-D-GlcNAc}-L-asparaginyl-[protein] + 2 H2O = 2 alpha-D-mannopyranose + an N(4)-{beta-D-GlcNAc-(1-&gt;2)-alpha-D-Man-(1-&gt;3)-[alpha-D-Man-(1-&gt;6)]-beta-D-Man-(1-&gt;4)-beta-D-GlcNAc-(1-&gt;4)-beta-D-GlcNAc}-L-asparaginyl-[protein]. It participates in protein modification; protein glycosylation. Its function is as follows. Catalyzes the first committed step in the biosynthesis of complex N-glycans. It controls conversion of high mannose to complex N-glycans; the final hydrolytic step in the N-glycan maturation pathway. The sequence is that of Alpha-mannosidase 2 from Drosophila melanogaster (Fruit fly).